Here is a 462-residue protein sequence, read N- to C-terminus: tRNA modification GTPase MnmE (462 aa).

(6S)-5-formyl-5,6,7,8-tetrahydrofolate contacts are provided by Arg-27, Glu-89, and Arg-128. Positions 224-383 (GLATAIVGRP…LDERIAKLFF (160 aa)) constitute a TrmE-type G domain. Asn-234 is a binding site for K(+). Residues 234-239 (NVGKSS), 253-259 (TDVAGTT), and 278-281 (DTAG) contribute to the GTP site. Mg(2+) is bound at residue Ser-238. Residues Thr-253, Val-255, and Thr-258 each contribute to the K(+) site. Position 259 (Thr-259) interacts with Mg(2+). Lys-462 is a binding site for (6S)-5-formyl-5,6,7,8-tetrahydrofolate.

The protein belongs to the TRAFAC class TrmE-Era-EngA-EngB-Septin-like GTPase superfamily. TrmE GTPase family. In terms of assembly, homodimer. Heterotetramer of two MnmE and two MnmG subunits. K(+) is required as a cofactor.

It is found in the cytoplasm. Exhibits a very high intrinsic GTPase hydrolysis rate. Involved in the addition of a carboxymethylaminomethyl (cmnm) group at the wobble position (U34) of certain tRNAs, forming tRNA-cmnm(5)s(2)U34. This chain is tRNA modification GTPase MnmE, found in Lacticaseibacillus paracasei (strain ATCC 334 / BCRC 17002 / CCUG 31169 / CIP 107868 / KCTC 3260 / NRRL B-441) (Lactobacillus paracasei).